Consider the following 544-residue polypeptide: Chaperonin GroEL (544 aa).

ATP-binding positions include 29–32 (TLGP), lysine 50, 86–90 (DGTTT), glycine 414, and aspartate 495.

The protein belongs to the chaperonin (HSP60) family. As to quaternary structure, forms a cylinder of 14 subunits composed of two heptameric rings stacked back-to-back. Interacts with the co-chaperonin GroES.

It is found in the cytoplasm. It catalyses the reaction ATP + H2O + a folded polypeptide = ADP + phosphate + an unfolded polypeptide.. Together with its co-chaperonin GroES, plays an essential role in assisting protein folding. The GroEL-GroES system forms a nano-cage that allows encapsulation of the non-native substrate proteins and provides a physical environment optimized to promote and accelerate protein folding. The protein is Chaperonin GroEL of Treponema pallidum subsp. pallidum (strain SS14).